The sequence spans 306 residues: MPKSEIRKLLQEIKKQVDNPGNSSTTEIKKMASEAGIDEQTAEEIYHLLTEFYQAVEEHGGIEKYMHSNISWLKIELELLSACYQIAILEDMKVLDISEMLSLNDLRIFPKTPSQLQNTYYKLKKELIQVEDIPKNKPGRKRKTQKNTKKEKTNIFGKVVPAEFKAPASIKEQISYDKSREKNLVDLLSGVKSNVQLLSENQGEENNVYDLLKSIYSLSSLAVQKEELDKKYQDLQTKCQELEQENSYLKQQNETMTDSFHTLVLQVADFAYASDLDQIQALPLFSQQLVVTLNQLGVFKENYKQM.

It is found in the cytoplasm. In terms of biological role, transcriptional repressor of flagellar motility genes, such as flaA, during extracellular growth at 37 degrees Celsius and during intracellular infection. Binds directly to the gene promoter region and probably prevents RNA polymerase binding. At low temperatures, MogR repression activity is modulated by the DegU response regulator in an unknown mechanism. Required for full virulence. The polypeptide is Motility gene repressor MogR (mogR) (Listeria monocytogenes serotype 1/2a (strain 10403S)).